Here is a 164-residue protein sequence, read N- to C-terminus: Interferon gamma (164 aa).

A signal peptide spans 1 to 19 (MTCQTYNLFVLSVIMIYYG). 2 N-linked (GlcNAc...) asparagine glycosylation sites follow: Asn-42 and Asn-61.

Belongs to the type II (or gamma) interferon family. In terms of assembly, homodimer.

It is found in the secreted. Produced by lymphocytes activated by specific antigens or mitogens. IFN-gamma, in addition to having antiviral activity, has important immunoregulatory functions. It is a potent activator of macrophages, it has antiproliferative effects on transformed cells and it can potentiate the antiviral and antitumor effects of the type I interferons. In Phasianus colchicus colchicus (Black-necked pheasant), this protein is Interferon gamma (IFNG).